We begin with the raw amino-acid sequence, 464 residues long: Protein ABHD18 (464 aa).

An N-terminal signal peptide occupies residues 1–24; that stretch reads MGVSKLDILYRRLLLTKLFIRGWG. Asn341 carries an N-linked (GlcNAc...) asparagine glycan.

Belongs to the AB hydrolase superfamily.

Its subcellular location is the secreted. This Mus musculus (Mouse) protein is Protein ABHD18.